Reading from the N-terminus, the 93-residue chain is DNA-directed RNA polymerase subunit omega (93 aa).

The protein belongs to the RNA polymerase subunit omega family. The RNAP catalytic core consists of 2 alpha, 1 beta, 1 beta' and 1 omega subunit. When a sigma factor is associated with the core the holoenzyme is formed, which can initiate transcription.

The enzyme catalyses RNA(n) + a ribonucleoside 5'-triphosphate = RNA(n+1) + diphosphate. Promotes RNA polymerase assembly. Latches the N- and C-terminal regions of the beta' subunit thereby facilitating its interaction with the beta and alpha subunits. This Actinobacillus pleuropneumoniae serotype 3 (strain JL03) protein is DNA-directed RNA polymerase subunit omega.